The sequence spans 366 residues: Mitogen-activated protein kinase sakA (366 aa).

The region spanning 20-299 (YTDLQPVGMG…AGEALAHEYL (280 aa)) is the Protein kinase domain. ATP is bound by residues 26–34 (VGMGAFGLV) and Lys-49. Asp-141 (proton acceptor) is an active-site residue. Thr-171 bears the Phosphothreonine mark. The TXY signature appears at 171-173 (TGY). Residue Tyr-173 is modified to Phosphotyrosine.

Belongs to the protein kinase superfamily. Ser/Thr protein kinase family. MAP kinase subfamily. HOG1 sub-subfamily. Interacts with the AGC kinase ypkA. Interacts with sakA upon osmotic and cell wall stresses. Mg(2+) is required as a cofactor. Dually phosphorylated on Thr-171 and Tyr-173, which activates the enzyme. Environmental stresses such as high temperature, osmotic stress, cold stress or ethanol stress modulate the activation of sakA via phosphorylation.

The protein resides in the cytoplasm. It is found in the nucleus. It carries out the reaction L-seryl-[protein] + ATP = O-phospho-L-seryl-[protein] + ADP + H(+). The enzyme catalyses L-threonyl-[protein] + ATP = O-phospho-L-threonyl-[protein] + ADP + H(+). Its activity is regulated as follows. Activated by tyrosine and threonine phosphorylation. Deactivated by protein phosphatase 2C homolog 2 ptcB. In terms of biological role, proline-directed serine/threonine-protein kinase involved in a signal transduction pathway that is activated by changes in the osmolarity of the extracellular environment. Controls osmotic regulation of transcription of target genes. Involved in environmental stress response. With mpkC, plays a redundant or cooperative role in the conidial stress resistance. Also plays a supportive role in osmotic stress adaptation when sakA is deficient. Involved in paradoxical growth, the cell wall integrity (CWI) pathway and biofilm formation. Also collaborates with mpkC to allow ful virulence in a neutropenic murine model ofinvasive pulmonary aspergillosis. MpkC and sakA have both independent and collaborative functions during the transcriptional response to transient osmotic stress and sakA not only seems to modulate pathways involved in nucleotide, fatty acid, nitrogen and organic acid biosynthesis but is also important for the activation of genes involved in mitochondrial and endoplasmic reticulum functions. In Aspergillus fumigatus (strain ATCC MYA-4609 / CBS 101355 / FGSC A1100 / Af293) (Neosartorya fumigata), this protein is Mitogen-activated protein kinase sakA.